A 729-amino-acid chain; its full sequence is MGTERKRKVSLFDVMEDPSLSSKNTKSNGLGLAAAAGGGSNLINKWNGKAYSQRYFEILEKRRDLPVWLQKDDFLNTLNSNQTLILVGETGSGKTTQIPQFVLDAVVADNSDKGRKWLVGCTQPRRVAAMSVSRRVADEMDVSIGEEVGYSIRFEDCTSSRTMLKYLTDGMLLREAMADPLLERYKVIILDEAHERTLATDVLFGLLKEVLRNRPDLKLVVMSATLEAEKFQEYFSGAPLMKVPGRLHPVEIFYTQEPERDYLEAAIRTVVQIHMCEPPGDILVFLTGEEEIEDACRKINKEVSNLGDQVGPVKVVPLYSTLPPAMQQKIFDPAPVPLTEGGPAGRKIVVSTNIAETSLTIDGIVYVIDPGFAKQKVYNPRIRVESLLVSPISKASAHQRSGRAGRTRPGKCFRLYTEKSFNNDLQPQTYPEILRSNLANTVLTLKKLGIDDLVHFDFMDPPAPETLMRALEVLNYLGALDDEGNLTKTGEIMSEFPLDPQMSKMLIVSPEFNCSNEILSVSAMLSVPNCFVRPREAQKAADEAKARFGHIDGDHLTLLNVYHAYKQNNEDPNWCFENFVNNRAMKSADNVRQQLVRIMSRFNLKMCSTDFNSRDYYVNIRKAMLAGYFMQVAHLERTGHYLTVKDNQVVHLHPSNCLDHKPEWVIYNEYVLTTRNFIRTVTDIRGEWLVDVAQHYYDLSNFPNCEAKRALEKLYKKREREKNESKNRK.

A Helicase ATP-binding domain is found at 75–244 (LNTLNSNQTL…FSGAPLMKVP (170 aa)). Residue 88-95 (GETGSGKT) coordinates ATP. The DEAH box signature appears at 191 to 194 (DEAH). The 181-residue stretch at 269 to 449 (TVVQIHMCEP…NTVLTLKKLG (181 aa)) folds into the Helicase C-terminal domain.

It belongs to the DEAD box helicase family. DEAH subfamily. PRP43 sub-subfamily.

It catalyses the reaction ATP + H2O = ADP + phosphate + H(+). Functionally, may be involved in pre-mRNA splicing. The chain is Probable pre-mRNA-splicing factor ATP-dependent RNA helicase DEAH3 from Arabidopsis thaliana (Mouse-ear cress).